We begin with the raw amino-acid sequence, 187 residues long: Large ribosomal subunit protein bL21 (187 aa).

The interval 157–187 (KVAKKAVKKTVKKATKTGAKKKAAKKTSKKA) is disordered.

The protein belongs to the bacterial ribosomal protein bL21 family. As to quaternary structure, part of the 50S ribosomal subunit. Contacts protein L20.

In terms of biological role, this protein binds to 23S rRNA in the presence of protein L20. The polypeptide is Large ribosomal subunit protein bL21 (Bdellovibrio bacteriovorus (strain ATCC 15356 / DSM 50701 / NCIMB 9529 / HD100)).